The chain runs to 114 residues: UPF0342 protein SH1117 (114 aa).

The protein belongs to the UPF0342 family.

The sequence is that of UPF0342 protein SH1117 from Staphylococcus haemolyticus (strain JCSC1435).